A 425-amino-acid chain; its full sequence is Aromatic prenyl transferase ptmE (425 aa).

Residues 83 to 84 and Glu-92 each bind L-tryptophan; that span reads GI. Substrate-binding residues include Arg-107, Lys-198, Tyr-200, Arg-265, Lys-267, Tyr-269, Tyr-345, Tyr-410, and Tyr-414.

The protein belongs to the tryptophan dimethylallyltransferase family. As to quaternary structure, homodimer.

It participates in secondary metabolite biosynthesis. Functionally, aromatic prenyl transferase; part of the gene cluster that mediates the biosynthesis of the indole diterpenes penitrems. The geranylgeranyl diphosphate (GGPP) synthase ptmG catalyzes the first step in penitrem biosynthesis via conversion of farnesyl pyrophosphate and isopentyl pyrophosphate into geranylgeranyl pyrophosphate (GGPP). Condensation of indole-3-glycerol phosphate with GGPP by the prenyl transferase ptmC then forms 3-geranylgeranylindole (3-GGI). Epoxidation by the FAD-dependent monooxygenase ptmM leads to a epoxidized-GGI that is substrate of the terpene cyclase ptmB for cyclization to yield paspaline. Paspaline is subsequently converted to 13-desoxypaxilline by the cytochrome P450 monooxygenase ptmP, the latter being then converted to paxilline by the cytochrome P450 monooxygenase ptmQ. Paxilline is converted to beta-paxitriol via C-10 ketoreduction by the short-chain dehydrogenase ptmH which can be monoprenylated at the C-20 by the indole diterpene prenyltransferase ptmD. A two-step elimination (acetylation and elimination) process performed by the O-acetyltransferase ptmV and ptmI leads to the production of the prenylated form of penijanthine. The FAD-linked oxidoreductase ptmO then converts the prenylated form of penijanthine into PC-M5 which is in turn transformed into PC-M4 by the aromatic dimethylallyltransferase ptmE. Five sequential oxidative transformations performed by the cytochrome P450 monooxygenases ptmK, ptmU, ptmL, ptmN and ptmJ yield the various penitrem compounds. PtmK, ptmU and ptmM are involved in the formation of the key bicyclic ring of penitrem C via the formation of the intermediates secopenitrem D and penitrem D. PtmL catalyzes the epoxidation of penitrem D and C to yield penitrem B and F, respectively. PtmJ catalyzes the last benzylic hydroxylation to convert penitrem B to prenitrem E and penitrem F to penitrem A. The polypeptide is Aromatic prenyl transferase ptmE (Penicillium ochrochloron).